Here is a 462-residue protein sequence, read N- to C-terminus: MATEKTMEKIVSLAKSRGFIFPGSEIYGGLANTWDYGPLGVELKNNVKKAWWKKFIQQSPYNVGLDAAILMNPKTWEASGHIGGFSDPLMDCKKCRSRFRADKLIEDYMHSQNEETVVDGWSNQQMKTYIEEKEIVCPECGAKDFTDIRQFNLMFKTFQGVTEDSSTEIFLRPETAQGIFVNFKNVLRTSRKKVPFGIGQIGKSFRNEITPGNFTFRTREFEQMELEFFCKPGEDLEWFNYWKEFCKNWLLNLNLTEENLRIRDHAEEELSHYSKATTDFEYRFPFGWGELWGVADRTDFDLKQHSEHSGEDFTYQDPITNEKYVPYCIEPSVGVDRVALAFLVDAYDEEVIDEKDTRVVLRLHPALAPFKAAVLPLTKKLKDQALELYETLSENYMVDYDEAGSIGKRYRRHDEIGTPFCITFDYDSLEDQCVTIRHRDSMEQERIQISELTTYLNEKLKF.

Residues arginine 100 and glutamate 174 each coordinate substrate. ATP contacts are provided by residues 206–208 (RNE), 216–221 (FRTREF), 290–291 (EL), and 334–337 (GVDR). 221–225 (FEQME) lines the substrate pocket. 330–334 (EPSVG) lines the substrate pocket.

The protein belongs to the class-II aminoacyl-tRNA synthetase family. Homodimer.

The protein resides in the cytoplasm. It carries out the reaction tRNA(Gly) + glycine + ATP = glycyl-tRNA(Gly) + AMP + diphosphate. Functionally, catalyzes the attachment of glycine to tRNA(Gly). The protein is Glycine--tRNA ligase of Alkaliphilus oremlandii (strain OhILAs) (Clostridium oremlandii (strain OhILAs)).